A 791-amino-acid polypeptide reads, in one-letter code: MARRAASRAVGALRSDGSIQGRGGRAGGSGAEDARHVFDELLRRGRGASIYGLNRALADVARDSPAAAVSRYNRMARAGADEVTPDLCTYGILIGCCCRAGRLDLGFAALGNVIKKGFRVDAIAFTPLLKGLCADKRTSDAMDIVLRRMTELGCIPNVFSYNILLKGLCDENRSQEALELLHMMADDRGGGSPPDVVSYTTVINGFFKEGDSDKAYSTYHEMLDRGILPDVVTYNSIIAALCKAQAMDKAMEVLNTMVKNGVMPDCMTYNSILHGYCSSGQPKEAIGFLKKMRSDGVEPDVVTYSLLMDYLCKNGRCMEARKIFDSMTKRGLKPEITTYGTLLQGYATKGALVEMHGLLDLMVRNGIHPDHYVFSILICAYAKQGKVDQAMLVFSKMRQQGLNPNAVTYGAVIGILCKSGRVEDAMLYFEQMIDEGLSPGNIVYNSLIHGLCTCNKWERAEELILEMLDRGICLNTIFFNSIIDSHCKEGRVIESEKLFELMVRIGVKPNVITYNTLINGYCLAGKMDEAMKLLSGMVSVGLKPNTVTYSTLINGYCKISRMEDALVLFKEMESSGVSPDIITYNIILQGLFQTRRTAAAKELYVRITESGTQIELSTYNIILHGLCKNKLTDDALQMFQNLCLMDLKLEARTFNIMIDALLKVGRNDEAKDLFVAFSSNGLVPNYWTYRLMAENIIGQGLLEELDQLFLSMEDNGCTVDSGMLNFIVRELLQRGEITRAGTYLSMIDEKHFSLEASTASLFIDLLSGGKYQEYYRFLPEKYKSFIESLSC.

The transit peptide at 1 to 27 (MARRAASRAVGALRSDGSIQGRGGRAG) directs the protein to the mitochondrion. Positions 1-31 (MARRAASRAVGALRSDGSIQGRGGRAGGSGA) are disordered. Positions 20–30 (QGRGGRAGGSG) are enriched in gly residues. 19 PPR repeats span residues 86–120 (DLCT…GFRV), 121–156 (DAIA…GCIP), 157–194 (NVFS…GSPP), 195–229 (DVVS…GILP), 230–264 (DVVT…GVMP), 265–299 (DCMT…GVEP), 300–334 (DVVT…GLKP), 335–369 (EITT…GIHP), 370–404 (DHYV…GLNP), 405–439 (NAVT…GLSP), 440–474 (GNIV…GICL), 475–509 (NTIF…GVKP), 510–544 (NVIT…GLKP), 545–579 (NTVT…GVSP), 580–614 (DIIT…GTQI), 615–649 (ELST…DLKL), 650–684 (EART…GLVP), 685–719 (NYWT…GCTV), and 720–754 (DSGM…HFSL).

It localises to the mitochondrion. Its function is as follows. Reduces the expression of the cytoplasmic male sterility (CMS)-associated mitochondrial gene ORF79, encoding a cytotoxic peptide. Can restore male fertility by blocking ORF79 production via endonucleolytic cleavage of dicistronic ATP6/ORF79 mRNA. Promotes the editing of ATP6 mRNAs independently of its cleavage function. This Oryza sativa subsp. indica (Rice) protein is Protein Rf1, mitochondrial (Rf1).